The sequence spans 661 residues: Acyl-coenzyme A oxidase acox-1.2 (661 aa).

FAD-binding positions include 147-150, 155-156, and Gly189; these read YAQT and GS. Residues 283–286 and Arg293 each bind substrate; that span reads KIGY. Residues Arg318 and 338 to 341 each bind FAD; that span reads QQHR. The ATP site is built by His340, Ser390, His394, and Gln402. Gly409 is an FAD binding site. 431-432 is a binding site for substrate; it reads YE. Glu432 (proton acceptor) is an active-site residue. Glu434 provides a ligand contact to FAD. Residues 525 to 528 and Tyr573 each bind ATP; that span reads RASR. Positions 659 to 661 match the Microbody targeting signal motif; it reads AKL.

The protein belongs to the acyl-CoA oxidase family. Homodimer. Forms a heterodimer with acox-1.1. FAD serves as cofactor.

It is found in the peroxisome. It carries out the reaction asc-omegaC5-CoA + O2 = asc-omegaDeltaC5-CoA + H2O2. Its pathway is lipid metabolism; peroxisomal fatty acid beta-oxidation. With respect to regulation, activated by ATP. ATP binding leads to a conformational change that promotes FAD cofactor binding and enzyme activity. ATP binding likely occurs during acox-1.2 folding and/or dimer formation. The preference for processing substrates with shorter fatty acid chains is likely due to the closed conformation of the active site. Its function is as follows. Involved in the first step of peroxisomal beta-oxidation by catalyzing the desaturation of fatty acid-derived side chains of ascaroside pheromones, which regulates development and behavior. Specifically, shortens ascarosides with 5-carbon omega side chain (asc-omega-C5). Does not shorten indol-3-carbonyl(IC)-ascaroside with 7-carbon or 9-carbon side chains. Does not catalyze the desaturation of fatty acids or hydroxylated fatty acids. In Caenorhabditis elegans, this protein is Acyl-coenzyme A oxidase acox-1.2.